The sequence spans 70 residues: Phycobilisome 8.1 kDa linker polypeptide, phycocyanin-associated, rod (70 aa).

Positions 5-63 (SRSFQVEVSGLHQNEVTNQNNYPIRSSGSVFITIPFSRFNEELQRINRLGGKIVNIQPL) constitute a CpcD-like domain.

The protein belongs to the phycobilisome linker protein family.

Its subcellular location is the cellular thylakoid membrane. In terms of biological role, rod linker protein, associated with phycocyanin. Linker polypeptides determine the state of aggregation and the location of the disk-shaped phycobiliprotein units within the phycobilisome and modulate their spectroscopic properties in order to mediate a directed and optimal energy transfer. This chain is Phycobilisome 8.1 kDa linker polypeptide, phycocyanin-associated, rod (cpcD3), found in Microchaete diplosiphon (Fremyella diplosiphon).